Consider the following 161-residue polypeptide: DNA-binding protein inhibitor ID-4 (161 aa).

The 53-residue stretch at 52–104 (AAEAAADEPALCLQCDMNDCYSRLRRLVPTIPPNKKVSKVEILPHVIDYILDL) folds into the bHLH domain. The segment at 116–161 (RQPPPPAPPHHPAGTCPAAPPRTPLTALNTDPAGAVNKQGDSILCR) is disordered. Residues 117 to 126 (QPPPPAPPHH) are compositionally biased toward pro residues.

In terms of assembly, heterodimer with other HLH proteins.

It is found in the nucleus. Its function is as follows. Transcriptional regulator (lacking a basic DNA binding domain) which negatively regulates the basic helix-loop-helix (bHLH) transcription factors by forming heterodimers and inhibiting their DNA binding and transcriptional activity. Implicated in regulating a variety of cellular processes, including cellular growth, senescence, differentiation, apoptosis, angiogenesis, and neoplastic transformation. The protein is DNA-binding protein inhibitor ID-4 (ID4) of Sus scrofa (Pig).